Consider the following 231-residue polypeptide: UPF0758 protein aq_1610 (231 aa).

In terms of domain architecture, MPN spans 110–231 (SIRNPQEAFE…YFSFREEGVL (122 aa)). Residues His180, His182, and Asp193 each contribute to the Zn(2+) site. The JAMM motif motif lies at 180–193 (HNHPQGEPSPSNED).

The protein belongs to the UPF0758 family.

The polypeptide is UPF0758 protein aq_1610 (Aquifex aeolicus (strain VF5)).